The primary structure comprises 567 residues: Urease subunit alpha (567 aa).

The Urease domain maps to 129–567 (GGIDAHIHFI…LPLTQRYCLF (439 aa)). Residues His-134, His-136, and Lys-217 each coordinate Ni(2+). An N6-carboxylysine modification is found at Lys-217. Residue His-219 participates in substrate binding. Ni(2+)-binding residues include His-246 and His-272. His-320 (proton donor) is an active-site residue. Asp-360 serves as a coordination point for Ni(2+).

The protein belongs to the metallo-dependent hydrolases superfamily. Urease alpha subunit family. In terms of assembly, heterotrimer of UreA (gamma), UreB (beta) and UreC (alpha) subunits. Three heterotrimers associate to form the active enzyme. Ni cation serves as cofactor. In terms of processing, carboxylation allows a single lysine to coordinate two nickel ions.

It localises to the cytoplasm. The catalysed reaction is urea + 2 H2O + H(+) = hydrogencarbonate + 2 NH4(+). Its pathway is nitrogen metabolism; urea degradation; CO(2) and NH(3) from urea (urease route): step 1/1. This Psychromonas ingrahamii (strain DSM 17664 / CCUG 51855 / 37) protein is Urease subunit alpha.